We begin with the raw amino-acid sequence, 349 residues long: Isopentenyl-diphosphate delta-isomerase (349 aa).

Residue 5–6 participates in substrate binding; it reads RK. FMN contacts are provided by residues S62, 63 to 65, S93, and N122; that span reads AIT. Residue 93–95 coordinates substrate; that stretch reads SQR. Residue Q151 coordinates substrate. E152 serves as a coordination point for Mg(2+). FMN contacts are provided by residues K183, T213, 259 to 261, and 280 to 281; these read GIR and AL.

The protein belongs to the IPP isomerase type 2 family. In terms of assembly, homooctamer. Dimer of tetramers. FMN is required as a cofactor. It depends on NADPH as a cofactor. The cofactor is Mg(2+).

It localises to the cytoplasm. It carries out the reaction isopentenyl diphosphate = dimethylallyl diphosphate. In terms of biological role, involved in the biosynthesis of isoprenoids. Catalyzes the 1,3-allylic rearrangement of the homoallylic substrate isopentenyl (IPP) to its allylic isomer, dimethylallyl diphosphate (DMAPP). In Methanothermobacter thermautotrophicus (strain ATCC 29096 / DSM 1053 / JCM 10044 / NBRC 100330 / Delta H) (Methanobacterium thermoautotrophicum), this protein is Isopentenyl-diphosphate delta-isomerase.